A 393-amino-acid chain; its full sequence is Cytochrome b (393 aa).

4 helical membrane passes run 32 to 52, 76 to 98, 113 to 133, and 179 to 199; these read FGSL…TLAM, WLIR…LHMG, VWTL…LGYV, and FFAL…MHLI. Heme b is bound by residues His82 and His96. Positions 183 and 197 each coordinate heme b. Position 202 (His202) interacts with a ubiquinone. Transmembrane regions (helical) follow at residues 226-246, 290-310, 322-342, and 349-369; these read FIFK…IFVF, LLGV…PFTD, LSKI…KLGA, and FIEF…IIVP.

Belongs to the cytochrome b family. In terms of assembly, fungal cytochrome b-c1 complex contains 10 subunits; 3 respiratory subunits, 2 core proteins and 5 low-molecular weight proteins. Cytochrome b-c1 complex is a homodimer. Heme b is required as a cofactor.

The protein resides in the mitochondrion inner membrane. Its function is as follows. Component of the ubiquinol-cytochrome c reductase complex (complex III or cytochrome b-c1 complex) that is part of the mitochondrial respiratory chain. The b-c1 complex mediates electron transfer from ubiquinol to cytochrome c. Contributes to the generation of a proton gradient across the mitochondrial membrane that is then used for ATP synthesis. The sequence is that of Cytochrome b (COB) from Venturia inaequalis (Apple scab fungus).